We begin with the raw amino-acid sequence, 306 residues long: Glutamyl-Q tRNA(Asp) synthetase (306 aa).

L-glutamate-binding positions include 4-8 (RYAPS) and glutamate 40. Positions 7–17 (PSPSGDLHFGN) match the 'HIGH' region motif. Zn(2+) is bound by residues cysteine 92, cysteine 94, tyrosine 113, and cysteine 117. L-glutamate-binding residues include tyrosine 180 and arginine 198. A 'KMSKS' region motif is present at residues 236–240 (RLAKR). Lysine 239 is an ATP binding site.

It belongs to the class-I aminoacyl-tRNA synthetase family. GluQ subfamily. Requires Zn(2+) as cofactor.

In terms of biological role, catalyzes the tRNA-independent activation of glutamate in presence of ATP and the subsequent transfer of glutamate onto a tRNA(Asp). Glutamate is transferred on the 2-amino-5-(4,5-dihydroxy-2-cyclopenten-1-yl) moiety of the queuosine in the wobble position of the QUC anticodon. The chain is Glutamyl-Q tRNA(Asp) synthetase from Corynebacterium efficiens (strain DSM 44549 / YS-314 / AJ 12310 / JCM 11189 / NBRC 100395).